We begin with the raw amino-acid sequence, 77 residues long: Sec-independent protein translocase protein TatA (77 aa).

A helical membrane pass occupies residues 1–21 (MGSFSIWHWLVVLAIVVLVFG). The tract at residues 40–77 (KEGMKGAEEENTQPPPSHQQVTGHSIKSEIEEKDQTKV) is disordered. The span at 65 to 77 (IKSEIEEKDQTKV) shows a compositional bias: basic and acidic residues.

It belongs to the TatA/E family. In terms of assembly, the Tat system comprises two distinct complexes: a TatABC complex, containing multiple copies of TatA, TatB and TatC subunits, and a separate TatA complex, containing only TatA subunits. Substrates initially bind to the TatABC complex, which probably triggers association of the separate TatA complex to form the active translocon.

It localises to the cell inner membrane. Functionally, part of the twin-arginine translocation (Tat) system that transports large folded proteins containing a characteristic twin-arginine motif in their signal peptide across membranes. TatA could form the protein-conducting channel of the Tat system. This Nitrosomonas eutropha (strain DSM 101675 / C91 / Nm57) protein is Sec-independent protein translocase protein TatA.